We begin with the raw amino-acid sequence, 205 residues long: ATP phosphoribosyltransferase (205 aa).

Belongs to the ATP phosphoribosyltransferase family. Short subfamily. Heteromultimer composed of HisG and HisZ subunits.

It localises to the cytoplasm. The catalysed reaction is 1-(5-phospho-beta-D-ribosyl)-ATP + diphosphate = 5-phospho-alpha-D-ribose 1-diphosphate + ATP. Its pathway is amino-acid biosynthesis; L-histidine biosynthesis; L-histidine from 5-phospho-alpha-D-ribose 1-diphosphate: step 1/9. In terms of biological role, catalyzes the condensation of ATP and 5-phosphoribose 1-diphosphate to form N'-(5'-phosphoribosyl)-ATP (PR-ATP). Has a crucial role in the pathway because the rate of histidine biosynthesis seems to be controlled primarily by regulation of HisG enzymatic activity. In Vesicomyosocius okutanii subsp. Calyptogena okutanii (strain HA), this protein is ATP phosphoribosyltransferase.